Here is a 1384-residue protein sequence, read N- to C-terminus: RRP12-like protein (1384 aa).

Over residues 1-13 (MGKFRSKLKRNGK) the composition is skewed to basic residues. Residues 1 to 32 (MGKFRSKLKRNGKGKTWSRGESATSNPTQMKH) form a disordered region. A compositionally biased stretch (polar residues) spans 19-29 (RGESATSNPTQ). Phosphoserine occurs at positions 82, 85, 96, 1094, 1095, 1117, and 1119. 3 disordered regions span residues 1082–1102 (LRKK…LVSG), 1114–1155 (LADS…IRED), and 1176–1384 (SAQT…KKYK). 2 stretches are compositionally biased toward acidic residues: residues 1090–1099 (AQEDSSDDEL) and 1114–1127 (LADS…DMDA). The segment covering 1176 to 1191 (SAQTATPAQSQKTKAQ) has biased composition (polar residues). Residues Ser-1221, Ser-1225, Ser-1227, Ser-1230, Ser-1250, and Ser-1251 each carry the phosphoserine modification. Composition is skewed to polar residues over residues 1276–1285 (SGKTTASSRY) and 1297–1315 (TAGN…TSRP). Residues 1321 to 1334 (GSKKAKGDMKKSGK) show a composition bias toward basic and acidic residues. Basic residues predominate over residues 1348-1362 (LNKRKRSMNSRKFKS). The segment covering 1369–1378 (AENGGAGGGR) has biased composition (gly residues).

This sequence belongs to the RRP12 family.

It is found in the nucleus. This Drosophila melanogaster (Fruit fly) protein is RRP12-like protein.